Consider the following 197-residue polypeptide: MVERKASVERNTLETQVKCSINLDGSGKARFDIGVPFLEHMLDQIARHGLIDLDIECKGDLHIDDHHTVEDVGITLGQAFAQAIGDKKGIYRYGHAYVPLDEALSRVVIDFSGRPGLQMHVPYTRASVGGFDVDLFQEFFQGFVNHALVTLHIDNLRGHNTHHQIETVFKAFGRALRMAIEQDERMAGQMPSTKGCL.

This sequence belongs to the imidazoleglycerol-phosphate dehydratase family.

The protein resides in the cytoplasm. It catalyses the reaction D-erythro-1-(imidazol-4-yl)glycerol 3-phosphate = 3-(imidazol-4-yl)-2-oxopropyl phosphate + H2O. It participates in amino-acid biosynthesis; L-histidine biosynthesis; L-histidine from 5-phospho-alpha-D-ribose 1-diphosphate: step 6/9. The chain is Imidazoleglycerol-phosphate dehydratase from Pseudomonas entomophila (strain L48).